Reading from the N-terminus, the 200-residue chain is Ras-related protein Rab-10 (200 aa).

Positions 18, 19, 20, 21, 22, 23, 24, 35, 36, 40, and 41 each coordinate GTP. Threonine 23 contributes to the Mg(2+) binding site. 2 short sequence motifs (switch) span residues 32-46 (DAFN…GIDF) and 64-81 (DTAG…YYRG). The Mg(2+) site is built by threonine 41 and aspartate 64. Glycine 67 contributes to the GTP binding site. Threonine 73 carries the phosphothreonine; by LRRK2 modification. Residue lysine 102 is modified to N6-acetyllysine. Residue lysine 102 forms a Glycyl lysine isopeptide (Lys-Gly) (interchain with G-Cter in ubiquitin) linkage. GTP is bound by residues asparagine 122, lysine 123, aspartate 125, and methionine 126. Lysine 136 is covalently cross-linked (Glycyl lysine isopeptide (Lys-Gly) (interchain with G-Cter in ubiquitin)). Positions 152, 153, and 154 each coordinate GTP. Lysine 154 participates in a covalent cross-link: Glycyl lysine isopeptide (Lys-Gly) (interchain with G-Cter in ubiquitin). 2 S-geranylgeranyl cysteine lipidation sites follow: cysteine 199 and cysteine 200.

It belongs to the small GTPase superfamily. Rab family. In terms of assembly, interacts with MYO5A; mediates the transport to the plasma membrane of SLC2A4/GLUT4 storage vesicles. Interacts with GDI1 and with GDI2; negatively regulates RAB10 association with membranes and activation. Interacts (GDP-bound form) with LLGL1; the interaction is direct and promotes RAB10 association with membranes and activation through competition with the Rab inhibitor GDI1. Interacts with EXOC4; probably associates with the exocyst. Interacts (GTP-bound form) with MICALCL, MICAL1, MICAL3, EHBP1 and EHBP1L1; at least in case of MICAL1 two molecules of RAB10 can bind to one molecule of MICAL1. Interacts with TBC1D13. Interacts with SEC16A. Interacts with CHM and CHML. Interacts with LRRK2; interaction facilitates phosphorylation of Thr-73. Interacts (when phosphorylated on Thr-73) with RILPL1 and RILPL2. Interacts with TBC1D21. Interacts with MARCKS. It depends on Mg(2+) as a cofactor. In terms of processing, ubiquitinated upon Legionella pneumophila infection. Ubiquitination does not lead to proteasomal degradation. Phosphorylation of Thr-73 in the switch II region by LRRK2 prevents the association of dRAB regulatory proteins, including CHM, CHML and RAB GDP dissociation inhibitors GDI1 and GDI2. Phosphorylation of Thr-73 by LRRK2 is stimulated by RAB29 and RAB32. Phosphorylation by LRRK2 is required for localization to stressed lysosomes. Expressed in the hippocampus. Expressed in neutrophils (at protein level). Expressed in the testis (at protein level).

The protein resides in the cytoplasmic vesicle membrane. Its subcellular location is the golgi apparatus membrane. The protein localises to the golgi apparatus. It localises to the trans-Golgi network membrane. It is found in the endosome membrane. The protein resides in the recycling endosome membrane. Its subcellular location is the cytoplasmic vesicle. The protein localises to the phagosome membrane. It localises to the cytoplasm. It is found in the cytoskeleton. The protein resides in the cilium basal body. Its subcellular location is the endoplasmic reticulum membrane. The protein localises to the perinuclear region. It localises to the lysosome. It carries out the reaction GTP + H2O = GDP + phosphate + H(+). With respect to regulation, regulated by guanine nucleotide exchange factors (GEFs) DENND4C and RABIF which promote the exchange of bound GDP for free GTP. Regulated by GTPase activating proteins (GAPs) including TBC1D21 which increase the GTP hydrolysis activity. Inhibited by GDP dissociation inhibitors GDI1 and GDI2 which prevent Rab-GDP dissociation. The small GTPases Rab are key regulators of intracellular membrane trafficking, from the formation of transport vesicles to their fusion with membranes. Rabs cycle between an inactive GDP-bound form and an active GTP-bound form that is able to recruit to membranes different set of downstream effectors directly responsible for vesicle formation, movement, tethering and fusion. That Rab is mainly involved in the biosynthetic transport of proteins from the Golgi to the plasma membrane. Regulates, for instance, SLC2A4/GLUT4 glucose transporter-enriched vesicles delivery to the plasma membrane. In parallel, it regulates the transport of TLR4, a toll-like receptor to the plasma membrane and therefore may be important for innate immune response. Also plays a specific role in asymmetric protein transport to the plasma membrane. In neurons, it is involved in axonogenesis through regulation of vesicular membrane trafficking toward the axonal plasma membrane. In epithelial cells, it regulates transport from the Golgi to the basolateral membrane. May play a role in the basolateral recycling pathway and in phagosome maturation. May play a role in endoplasmic reticulum dynamics and morphology controlling tubulation along microtubules and tubules fusion. Together with LRRK2, RAB8A, and RILPL1, it regulates ciliogenesis. When phosphorylated by LRRK2 on Thr-73, binds RILPL1 and inhibits ciliogenesis. Participates in the export of a subset of neosynthesized proteins through a Rab8-Rab10-Rab11-dependent endososomal export route. Targeted to and stabilized on stressed lysosomes through LRRK2 phosphorylation where it promotes the extracellular release of lysosomal content through EHBP1 and EHNP1L1 effector proteins. In terms of biological role, (Microbial infection) Upon Legionella pneumophila infection promotes endoplasmic reticulum recruitment and bacterial replication. Plays a role in remodeling the Legionella-containing vacuole (LCV) into an endoplasmic reticulum-like vacuole. The chain is Ras-related protein Rab-10 from Homo sapiens (Human).